The chain runs to 449 residues: Chromosomal replication initiator protein DnaA (449 aa).

Positions 1 to 72 (MENIHDLWER…SETIDDLTGV (72 aa)) are domain I, interacts with DnaA modulators. The domain II stretch occupies residues 72 to 111 (VRLYPKFVIPTSQLDEPFVEQELKKPMKQPPAQNGEMPNN). Residues 112–328 (MLNDKYTFDT…GALIRVVAYS (217 aa)) are domain III, AAA+ region. ATP contacts are provided by Gly-156, Gly-158, Lys-159, and Thr-160. Residues 329-449 (SLINQDMNAD…IQDISDKLRS (121 aa)) are domain IV, binds dsDNA.

This sequence belongs to the DnaA family. Oligomerizes as a right-handed, spiral filament on DNA at oriC.

The protein localises to the cytoplasm. Its function is as follows. Plays an essential role in the initiation and regulation of chromosomal replication. ATP-DnaA binds to the origin of replication (oriC) to initiate formation of the DNA replication initiation complex once per cell cycle. Binds the DnaA box (a 9 base pair repeat at the origin) and separates the double-stranded (ds)DNA. Forms a right-handed helical filament on oriC DNA; dsDNA binds to the exterior of the filament while single-stranded (ss)DNA is stabiized in the filament's interior. The ATP-DnaA-oriC complex binds and stabilizes one strand of the AT-rich DNA unwinding element (DUE), permitting loading of DNA polymerase. After initiation quickly degrades to an ADP-DnaA complex that is not apt for DNA replication. Binds acidic phospholipids. The protein is Chromosomal replication initiator protein DnaA of Halalkalibacterium halodurans (strain ATCC BAA-125 / DSM 18197 / FERM 7344 / JCM 9153 / C-125) (Bacillus halodurans).